Here is an 81-residue protein sequence, read N- to C-terminus: Translational regulator CsrA (81 aa).

It belongs to the CsrA/RsmA family. As to quaternary structure, homodimer; the beta-strands of each monomer intercalate to form a hydrophobic core, while the alpha-helices form wings that extend away from the core.

The protein resides in the cytoplasm. A translational regulator that binds mRNA to regulate translation initiation and/or mRNA stability. Usually binds in the 5'-UTR at or near the Shine-Dalgarno sequence preventing ribosome-binding, thus repressing translation. Its main target seems to be the major flagellin gene, while its function is anatagonized by FliW. This is Translational regulator CsrA from Desulforapulum autotrophicum (strain ATCC 43914 / DSM 3382 / VKM B-1955 / HRM2) (Desulfobacterium autotrophicum).